The primary structure comprises 702 residues: uncharacterized protein (702 aa).

Composition is skewed to low complexity over residues 306-384 (NNNN…NNNN), 488-511 (PTKTTTSSNNSRNTSPTSSTTNIT), 559-590 (QQSQQQQQQQQQQQQQQQESNFYSNNNNNNNN), 603-612 (SNQNSNNNNQ), and 621-639 (NNNNNNTNSNNSNNNNNNN). Disordered regions lie at residues 306 to 385 (NNNN…NNNE), 488 to 513 (PTKTTTSSNNSRNTSPTSSTTNITYG), and 551 to 645 (STMN…NSRY). Positions 337–489 (NNINNNINNN…IKSLDILSPT (153 aa)) constitute a VPS9 domain.

This is an uncharacterized protein from Dictyostelium discoideum (Social amoeba).